Reading from the N-terminus, the 69-residue chain is Cytochrome c oxidase subunit 8A, mitochondrial (69 aa).

A mitochondrion-targeting transit peptide spans Met-1–Gln-25. The short motif at Ser-2–Leu-19 is the SIFI-degron element. The Mitochondrial matrix segment spans residues Ile-26–Gly-36. Residues Thr-37–Ser-60 form a helical membrane-spanning segment. The Mitochondrial intermembrane segment spans residues His-61–Glu-69.

It belongs to the cytochrome c oxidase VIII family. In terms of assembly, component of the cytochrome c oxidase (complex IV, CIV), a multisubunit enzyme composed of 14 subunits. The complex is composed of a catalytic core of 3 subunits MT-CO1, MT-CO2 and MT-CO3, encoded in the mitochondrial DNA, and 11 supernumerary subunits COX4I1 (or COX4I2), COX5A, COX5B, COX6A2 (or COX6A1), COX6B1 (or COX6B2), COX6C, COX7A1 (or COX7A2), COX7B, COX7C, COX8B and NDUFA4, which are encoded in the nuclear genome. The complex exists as a monomer or a dimer and forms supercomplexes (SCs) in the inner mitochondrial membrane with NADH-ubiquinone oxidoreductase (complex I, CI) and ubiquinol-cytochrome c oxidoreductase (cytochrome b-c1 complex, complex III, CIII), resulting in different assemblies (supercomplex SCI(1)III(2)IV(1) and megacomplex MCI(2)III(2)IV(2)). In response to mitochondrial stress, the precursor protein is ubiquitinated by the SIFI complex in the cytoplasm before mitochondrial import, leading to its degradation. Within the SIFI complex, UBR4 initiates ubiquitin chain that are further elongated or branched by KCMF1.

The protein localises to the mitochondrion inner membrane. It participates in energy metabolism; oxidative phosphorylation. In terms of biological role, component of the cytochrome c oxidase, the last enzyme in the mitochondrial electron transport chain which drives oxidative phosphorylation. The respiratory chain contains 3 multisubunit complexes succinate dehydrogenase (complex II, CII), ubiquinol-cytochrome c oxidoreductase (cytochrome b-c1 complex, complex III, CIII) and cytochrome c oxidase (complex IV, CIV), that cooperate to transfer electrons derived from NADH and succinate to molecular oxygen, creating an electrochemical gradient over the inner membrane that drives transmembrane transport and the ATP synthase. Cytochrome c oxidase is the component of the respiratory chain that catalyzes the reduction of oxygen to water. Electrons originating from reduced cytochrome c in the intermembrane space (IMS) are transferred via the dinuclear copper A center (CU(A)) of subunit 2 and heme A of subunit 1 to the active site in subunit 1, a binuclear center (BNC) formed by heme A3 and copper B (CU(B)). The BNC reduces molecular oxygen to 2 water molecules using 4 electrons from cytochrome c in the IMS and 4 protons from the mitochondrial matrix. This Bos taurus (Bovine) protein is Cytochrome c oxidase subunit 8A, mitochondrial (COX8A).